A 664-amino-acid chain; its full sequence is Protein-arginine deiminase type-3 (664 aa).

It belongs to the protein arginine deiminase family. Requires Ca(2+) as cofactor. In terms of tissue distribution, hair follicles, and epidermis at very low levels.

It localises to the cytoplasm. It carries out the reaction L-arginyl-[protein] + H2O = L-citrullyl-[protein] + NH4(+). Catalyzes the deimination of arginine residues of proteins. The protein is Protein-arginine deiminase type-3 (PADI3) of Homo sapiens (Human).